A 260-amino-acid polypeptide reads, in one-letter code: Imidazole glycerol phosphate synthase subunit HisF (260 aa).

Active-site residues include Asp-11 and Asp-130.

This sequence belongs to the HisA/HisF family. In terms of assembly, heterodimer of HisH and HisF.

The protein resides in the cytoplasm. The catalysed reaction is 5-[(5-phospho-1-deoxy-D-ribulos-1-ylimino)methylamino]-1-(5-phospho-beta-D-ribosyl)imidazole-4-carboxamide + L-glutamine = D-erythro-1-(imidazol-4-yl)glycerol 3-phosphate + 5-amino-1-(5-phospho-beta-D-ribosyl)imidazole-4-carboxamide + L-glutamate + H(+). It functions in the pathway amino-acid biosynthesis; L-histidine biosynthesis; L-histidine from 5-phospho-alpha-D-ribose 1-diphosphate: step 5/9. Functionally, IGPS catalyzes the conversion of PRFAR and glutamine to IGP, AICAR and glutamate. The HisF subunit catalyzes the cyclization activity that produces IGP and AICAR from PRFAR using the ammonia provided by the HisH subunit. The chain is Imidazole glycerol phosphate synthase subunit HisF from Desulfatibacillum aliphaticivorans.